Consider the following 103-residue polypeptide: MDISIISDKNNPLLYRREIKFTVSFDAATPSIKDVKMKLVAVLNADKKVLVVDTLDQIFGKLEAEGYAKIYNDEKAMATIETKSVLEKNKIEEEAAEAEVAEE.

The protein belongs to the eukaryotic ribosomal protein eS24 family.

The polypeptide is Small ribosomal subunit protein eS24 (Methanococcus maripaludis (strain C6 / ATCC BAA-1332)).